An 88-amino-acid polypeptide reads, in one-letter code: Putative sulfur carrier protein AF_0552 (88 aa).

The protein belongs to the sulfur carrier protein CysO family.

The sequence is that of Putative sulfur carrier protein AF_0552 from Archaeoglobus fulgidus (strain ATCC 49558 / DSM 4304 / JCM 9628 / NBRC 100126 / VC-16).